We begin with the raw amino-acid sequence, 137 residues long: Protein archease (137 aa).

Positions 11, 136, and 137 each coordinate Ca(2+).

The protein belongs to the archease family.

Its function is as follows. Activates the tRNA-splicing ligase complex by facilitating the enzymatic turnover of catalytic subunit RtcB. Acts by promoting the guanylylation of RtcB, a key intermediate step in tRNA ligation. Can also alter the NTP specificity of RtcB such that ATP, dGTP or ITP is used efficiently. The chain is Protein archease from Archaeoglobus fulgidus (strain ATCC 49558 / DSM 4304 / JCM 9628 / NBRC 100126 / VC-16).